The primary structure comprises 197 residues: Glycerol-3-phosphate acyltransferase (197 aa).

Transmembrane regions (helical) follow at residues 1–21 (MNIL…GFLI), 50–70 (WPAL…VKIA), 77–97 (GLIE…PIWL), 111–131 (MFLA…LIVL), 137–157 (VSLS…FYLG), and 158–178 (KFMH…IWKH).

It belongs to the PlsY family. In terms of assembly, probably interacts with PlsX.

The protein localises to the cell inner membrane. It carries out the reaction an acyl phosphate + sn-glycerol 3-phosphate = a 1-acyl-sn-glycero-3-phosphate + phosphate. It participates in lipid metabolism; phospholipid metabolism. Functionally, catalyzes the transfer of an acyl group from acyl-phosphate (acyl-PO(4)) to glycerol-3-phosphate (G3P) to form lysophosphatidic acid (LPA). This enzyme utilizes acyl-phosphate as fatty acyl donor, but not acyl-CoA or acyl-ACP. In Prochlorococcus marinus (strain MIT 9301), this protein is Glycerol-3-phosphate acyltransferase.